The following is a 403-amino-acid chain: Lipid droplet-regulating VLDL assembly factor AUP1 (403 aa).

Residues 1-21 (MEQPSVESLLELRRFPRKQLS) lie on the Cytoplasmic side of the membrane. Residues 22 to 42 (LILLLLYSPLGLCLFLIRLFI) lie within the membrane without spanning it. The Cytoplasmic segment spans residues 43–399 (GAHVFLVSCV…GSVGREEEEK (357 aa)). The 43-residue stretch at 286-328 (TQMQMAQHVKEVLPQVPLSAIHRDLGHTGCIDTTITNFLEGRV) folds into the CUE domain.

This sequence belongs to the AUP1 family.

It localises to the endoplasmic reticulum membrane. Its subcellular location is the lipid droplet. In terms of biological role, plays a role in the translocation of terminally misfolded proteins from the endoplasmic reticulum lumen to the cytoplasm and their degradation by the proteasome. Plays a role in lipid droplet formation. Induces lipid droplet clustering. The chain is Lipid droplet-regulating VLDL assembly factor AUP1 from Xenopus tropicalis (Western clawed frog).